The sequence spans 47 residues: Photosystem II reaction center protein K (47 aa).

Positions 1-10 (MNIGFDMILA) are excised as a propeptide. A helical membrane pass occupies residues 22–42 (LVDVLPVIPLLFLLLAFVWQA).

The protein belongs to the PsbK family. PSII is composed of 1 copy each of membrane proteins PsbA, PsbB, PsbC, PsbD, PsbE, PsbF, PsbH, PsbI, PsbJ, PsbK, PsbL, PsbM, PsbT, PsbX, PsbY, PsbZ, Psb30/Ycf12, at least 3 peripheral proteins of the oxygen-evolving complex and a large number of cofactors. It forms dimeric complexes.

It localises to the plastid. It is found in the chloroplast thylakoid membrane. In terms of biological role, one of the components of the core complex of photosystem II (PSII). PSII is a light-driven water:plastoquinone oxidoreductase that uses light energy to abstract electrons from H(2)O, generating O(2) and a proton gradient subsequently used for ATP formation. It consists of a core antenna complex that captures photons, and an electron transfer chain that converts photonic excitation into a charge separation. In Mesostigma viride (Green alga), this protein is Photosystem II reaction center protein K.